We begin with the raw amino-acid sequence, 266 residues long: Gas vesicle protein L (266 aa).

The protein belongs to the gas vesicle GvpF/GvpL family.

It is found in the gas vesicle. Its function is as follows. Might be involved in nucleating gas vesicle formation. A minor component of the gas vesicle. Gas vesicles are hollow, gas filled proteinaceous nanostructures found in some microorganisms. It is not clear what function gas vesicles perform in soil bacteria. The sequence is that of Gas vesicle protein L from Streptomyces sp. (strain CB03234).